Here is a 458-residue protein sequence, read N- to C-terminus: Divalent metal cation transporter MntH (458 aa).

11 helical membrane-spanning segments follow: residues G38 to M58, S76 to A96, G119 to I139, M151 to M171, A180 to A200, M223 to G243, L275 to G295, I315 to S335, L370 to I390, L393 to V413, and F437 to V457.

Belongs to the NRAMP family.

Its subcellular location is the cell membrane. Its function is as follows. H(+)-stimulated, divalent metal cation uptake system. This is Divalent metal cation transporter MntH from Lacticaseibacillus casei (strain BL23) (Lactobacillus casei).